Reading from the N-terminus, the 386-residue chain is ABC transporter permease protein NatB (386 aa).

Helical transmembrane passes span 19–39 (TILLTILVPMIMMLGLVFFYE), 172–192 (AIMLSAILPMLILTSIVSGAM), 226–246 (WLAVSTFGVASGVFALVFLIL), 273–293 (ALIIVLSALLISAMELFISIM), 300–320 (AQSYMSLVVFLPVFPMFFIFS), and 353–373 (ATILSTSGTIAVLIAIFFLLA).

In terms of assembly, the complex is composed of NatA and NatB.

It is found in the cell membrane. The enzyme catalyses Na(+)(in) + ATP + H2O = Na(+)(out) + ADP + phosphate + H(+). In terms of biological role, part of an ABC transporter that catalyzes ATP-dependent electrogenic sodium extrusion. This is ABC transporter permease protein NatB from Bacillus subtilis (strain 168).